The sequence spans 280 residues: S-methyl-5'-thioadenosine phosphorylase (280 aa).

Residues S15, 57–58 (RH), and 90–91 (TA) each bind phosphate. M193 provides a ligand contact to substrate. Phosphate is bound at residue T194. A substrate-binding site is contributed by 217–219 (DYD).

This sequence belongs to the PNP/MTAP phosphorylase family. MTAP subfamily. Homotrimer.

The protein localises to the cytoplasm. It localises to the nucleus. The catalysed reaction is S-methyl-5'-thioadenosine + phosphate = 5-(methylsulfanyl)-alpha-D-ribose 1-phosphate + adenine. It participates in amino-acid biosynthesis; L-methionine biosynthesis via salvage pathway; S-methyl-5-thio-alpha-D-ribose 1-phosphate from S-methyl-5'-thioadenosine (phosphorylase route): step 1/1. In terms of biological role, catalyzes the reversible phosphorylation of S-methyl-5'-thioadenosine (MTA) to adenine and 5-methylthioribose-1-phosphate. Involved in the breakdown of MTA, a major by-product of polyamine biosynthesis. Responsible for the first step in the methionine salvage pathway after MTA has been generated from S-adenosylmethionine. Has broad substrate specificity with 6-aminopurine nucleosides as preferred substrates. This chain is S-methyl-5'-thioadenosine phosphorylase (mtap), found in Danio rerio (Zebrafish).